Consider the following 386-residue polypeptide: Bifunctional chorismate mutase/prephenate dehydratase (386 aa).

The Chorismate mutase domain maps to 1-92 (MTSENPLLAL…DSVLTQQALL (92 aa)). 7 residues coordinate substrate: R11, R28, K39, D48, E52, S84, and Q88. The Prephenate dehydratase domain occupies 105–285 (RIAFLGPKGS…NFTRFVVLAR (181 aa)). Residues 299 to 376 (TLLMATGQQA…RSMKVLGCYP (78 aa)) enclose the ACT domain.

Its subcellular location is the cytoplasm. It carries out the reaction chorismate = prephenate. It catalyses the reaction prephenate + H(+) = 3-phenylpyruvate + CO2 + H2O. The protein operates within amino-acid biosynthesis; L-phenylalanine biosynthesis; phenylpyruvate from prephenate: step 1/1. It functions in the pathway metabolic intermediate biosynthesis; prephenate biosynthesis; prephenate from chorismate: step 1/1. Catalyzes the Claisen rearrangement of chorismate to prephenate and the decarboxylation/dehydration of prephenate to phenylpyruvate. The polypeptide is Bifunctional chorismate mutase/prephenate dehydratase (pheA) (Escherichia coli O157:H7).